Here is a 116-residue protein sequence, read N- to C-terminus: Large ribosomal subunit protein bL17 (116 aa).

The protein belongs to the bacterial ribosomal protein bL17 family. In terms of assembly, part of the 50S ribosomal subunit. Contacts protein L32.

The protein is Large ribosomal subunit protein bL17 of Prochlorococcus marinus (strain MIT 9215).